Here is a 439-residue protein sequence, read N- to C-terminus: MRLSRYFLPILRENPKEAEIVSHRLMLRAGMIRQEAAGIYAWLPLGFRVLQKVEQIVREEMDRAGAIELLMPTLQLADLWRETGRYDAYGPEMLRIKDRHERELLYGPTNEDMITEIFRAYVRSYRDLPKILYHIQWKFRDEQRPRFGVMRGREFLMKDAYSFDLDEEGARLSYNKMFVAYLRIYKRMGLTAIPMRAETGPIGGDLSHEFIILADTGESAVFCNKDVLDLPIPDEHTDYDGDLSPIIKQWTSLYAATEDVHDAARFESETPPEKRIERRGIEVGQVFYFGEKYSKPMRSLITGPDGSEKPFQGGSYGVGVSRLVGAIIEASHDEAGIIWPEAVAPFTVGLANLKVGDAATDAACAEIYERLEALGVDVLYDDTDDRPGGKFAKLDLIGLPYQIIVGPKGLAEGKIEMKTRATGARENLSIAAVIERFTT.

This sequence belongs to the class-II aminoacyl-tRNA synthetase family. ProS type 2 subfamily. As to quaternary structure, homodimer.

The protein localises to the cytoplasm. The catalysed reaction is tRNA(Pro) + L-proline + ATP = L-prolyl-tRNA(Pro) + AMP + diphosphate. In terms of biological role, catalyzes the attachment of proline to tRNA(Pro) in a two-step reaction: proline is first activated by ATP to form Pro-AMP and then transferred to the acceptor end of tRNA(Pro). The protein is Proline--tRNA ligase of Beijerinckia indica subsp. indica (strain ATCC 9039 / DSM 1715 / NCIMB 8712).